Here is a 110-residue protein sequence, read N- to C-terminus: Iron-sulfur cluster assembly protein CyaY (110 aa).

It belongs to the frataxin family.

Involved in iron-sulfur (Fe-S) cluster assembly. May act as a regulator of Fe-S biogenesis. The chain is Iron-sulfur cluster assembly protein CyaY from Azotobacter vinelandii (strain DJ / ATCC BAA-1303).